A 285-amino-acid chain; its full sequence is Shikimate dehydrogenase (NADP(+)) (285 aa).

Residues 21–23 and T68 contribute to the shikimate site; that span reads SRS. K72 (proton acceptor) is an active-site residue. NADP(+) is bound at residue E83. N92 and D107 together coordinate shikimate. NADP(+)-binding positions include 132-136, 156-161, and L221; these read GAGGS and NRTMER. Residue Y223 participates in shikimate binding. G244 serves as a coordination point for NADP(+).

This sequence belongs to the shikimate dehydrogenase family. Homodimer.

It catalyses the reaction shikimate + NADP(+) = 3-dehydroshikimate + NADPH + H(+). Its pathway is metabolic intermediate biosynthesis; chorismate biosynthesis; chorismate from D-erythrose 4-phosphate and phosphoenolpyruvate: step 4/7. Involved in the biosynthesis of the chorismate, which leads to the biosynthesis of aromatic amino acids. Catalyzes the reversible NADPH linked reduction of 3-dehydroshikimate (DHSA) to yield shikimate (SA). This is Shikimate dehydrogenase (NADP(+)) from Nitrobacter hamburgensis (strain DSM 10229 / NCIMB 13809 / X14).